An 857-amino-acid polypeptide reads, in one-letter code: Envelope glycoprotein B (857 aa).

Positions 1–21 (MTRRRVLSVVVLLAALACRLG) are cleaved as a signal peptide. The Virion surface segment spans residues 22 to 732 (AQTPEQPAPP…SGFISFFKNP (711 aa)). 5 cysteine pairs are disulfide-bonded: C51/C528, C68/C484, C141/C206, C295/C342, and C551/C588. The N-linked (GlcNAc...) asparagine; by host glycan is linked to N76. The interval 108–114 (IYNGWYA) is involved in fusion and/or binding to host membrane. N163 is a glycosylation site (N-linked (GlcNAc...) asparagine; by host). The interval 192-200 (GWLIWTYRT) is involved in fusion and/or binding to host membrane. 4 N-linked (GlcNAc...) asparagine; by host glycosylation sites follow: N290, N329, N348, and N395. Residues 398 to 452 (ELTTPTSSPPSSPSPPAPPAARGSTSAAVLRRRRRDAGNATTPVPPAAPGKSLGT) are disordered. Pro residues predominate over residues 404-416 (SSPPSSPSPPAPP). N436, N563, and N629 each carry an N-linked (GlcNAc...) asparagine; by host glycan. 2 hydrophobic membrane proximal region regions span residues 678 to 730 (LDNA…SFFK) and 709 to 729 (NLVSTVGGLFSSLVSGFISFF). A helical membrane pass occupies residues 733-753 (FGGMLILVLVAGVVILVISLT). At 754-857 (RRTRQMSQQP…ALLGEAETEF (104 aa)) the chain is on the intravirion side. The interval 832 to 857 (FPGLRRRRYHDPETAAALLGEAETEF) is disordered. Positions 845–857 (TAAALLGEAETEF) are enriched in low complexity.

This sequence belongs to the herpesviridae glycoprotein B family. As to quaternary structure, homotrimer; disulfide-linked. Binds to heparan sulfate proteoglycans. Interacts with gH/gL heterodimer. A proteolytic cleavage by host furin generates two subunits that remain linked by disulfide bonds.

The protein resides in the virion membrane. Its subcellular location is the host cell membrane. The protein localises to the host endosome membrane. It is found in the host Golgi apparatus membrane. Envelope glycoprotein that forms spikes at the surface of virion envelope. Essential for the initial attachment to heparan sulfate moieties of the host cell surface proteoglycans. Involved in fusion of viral and cellular membranes leading to virus entry into the host cell. Following initial binding to its host receptors, membrane fusion is mediated by the fusion machinery composed at least of gB and the heterodimer gH/gL. May be involved in the fusion between the virion envelope and the outer nuclear membrane during virion egress. This is Envelope glycoprotein B from Epstein-Barr virus (strain GD1) (HHV-4).